A 283-amino-acid chain; its full sequence is D-alanine aminotransferase (283 aa).

Residue Tyr32 coordinates substrate. Arg51 provides a ligand contact to pyridoxal 5'-phosphate. Substrate is bound by residues Arg99 and His101. Catalysis depends on Lys146, which acts as the Proton acceptor. Lys146 is modified (N6-(pyridoxal phosphate)lysine). Glu178 contacts pyridoxal 5'-phosphate.

Belongs to the class-IV pyridoxal-phosphate-dependent aminotransferase family. Homodimer. Pyridoxal 5'-phosphate is required as a cofactor.

The catalysed reaction is D-alanine + 2-oxoglutarate = D-glutamate + pyruvate. Its function is as follows. Acts on the D-isomers of alanine, leucine, aspartate, glutamate, aminobutyrate, norvaline and asparagine. The enzyme transfers an amino group from a substrate D-amino acid to the pyridoxal phosphate cofactor to form pyridoxamine and an alpha-keto acid in the first half-reaction. The second-half reaction is the reverse of the first, transferring the amino group from the pyridoxamine to a second alpha-keto acid to form the product D-amino acid via a ping-pong mechanism. This is an important process in the formation of D-alanine and D-glutamate, which are essential bacterial cell wall components. The polypeptide is D-alanine aminotransferase (dat) (Bacillus sp. (strain YM-1)).